The chain runs to 277 residues: 3-methyl-2-oxobutanoate hydroxymethyltransferase (277 aa).

Asp43 and Asp82 together coordinate Mg(2+). 3-methyl-2-oxobutanoate-binding positions include Asp43 to Ser44, Asp82, and Lys112. Glu114 lines the Mg(2+) pocket. The Proton acceptor role is filled by Glu181.

It belongs to the PanB family. As to quaternary structure, homodecamer; pentamer of dimers. Requires Mg(2+) as cofactor.

The protein localises to the cytoplasm. It carries out the reaction 3-methyl-2-oxobutanoate + (6R)-5,10-methylene-5,6,7,8-tetrahydrofolate + H2O = 2-dehydropantoate + (6S)-5,6,7,8-tetrahydrofolate. Its pathway is cofactor biosynthesis; (R)-pantothenate biosynthesis; (R)-pantoate from 3-methyl-2-oxobutanoate: step 1/2. In terms of biological role, catalyzes the reversible reaction in which hydroxymethyl group from 5,10-methylenetetrahydrofolate is transferred onto alpha-ketoisovalerate to form ketopantoate. This is 3-methyl-2-oxobutanoate hydroxymethyltransferase from Bacillus subtilis (strain 168).